A 779-amino-acid chain; its full sequence is MIISRPLCGFVFAGLSFAVILPAQALVAADNQAARAEIRRTGFGVPHIVAANERGLGYGIGYAYAQDNLCLLANEVVTVNGERSRYFGPDKATLEQRSNMASDLLFKWLNTPEALADFWKAQPPEIRQLMQGYVAGYNRSLDEQKTKGLPRPCAADWVRPISTDDLLRLTRRLLVEGGVGQFTEAFAGAKPPSAQKPLQVDSQQVQALQLAAVRNQRFALERGSNAVAVGHELSANGRGMLLANPHFPWGGGMRFYQMHLTIPGKLDVMGAALPGLPLINIGFNRHLAWSHTVDTSKHFTLHRLQLDPKDSTRYLLDGKSIAMGQQQVSVEVKQPDGSLKDVPRIIYSSKFGPVVQWPGKLDWDDKFAFSLRDANLENDRVLQQWYSMDKADSLKAFQDSLHKIQGIPWVNTLAVDAKGQALYMNLSVVPNVDAAKLAKCSDPRIGTELIVLDGSRSECNWDISAEAAQAGIYPSSRQPQLLRSDFVQHSNDSAWMVNPAAPLKGFSPLISQDGQPLGQRARFALDRLGSLQQAGKVSAENLQAMVMDNEVYQAGQVLPDLLKFCASELGDDVARLTPLCAALKAWDGRADLNSGIGFVYFQRIMTSMQGVASRWRVVFDPQNPIHTPSGLAIENPQVASALRAAMLAAVDEVAKAGLSPESKWGDIQVSSLSGKPIPIHGGPAGLGVYNAMQTIAGKDGKREVVSGTSYLQVVTFDEQGPRAQGLLAFSESSNPQSAHSSDQTEAFSKKQWSELPFTEQQIKADPAYQVQVISEEGSR.

An N-terminal signal peptide occupies residues 1–25; sequence MIISRPLCGFVFAGLSFAVILPAQA. Positions 202–223 are cleaved as a propeptide — spacer peptide; sequence SQQVQALQLAAVRNQRFALERG. Catalysis depends on Ser224, which acts as the Nucleophile. The segment covering 731 to 746 has biased composition (polar residues); it reads ESSNPQSAHSSDQTEA. A disordered region spans residues 731 to 752; the sequence is ESSNPQSAHSSDQTEAFSKKQW.

The protein belongs to the peptidase S45 family. In terms of assembly, heterodimer of an alpha subunit and a beta subunit processed from the same precursor.

The protein localises to the periplasm. It catalyses the reaction an N-acyl-L-homoserine lactone + H2O = L-homoserine lactone + a carboxylate. In terms of biological role, catalyzes the deacylation of acyl-homoserine lactone (AHL or acyl-HSL), releasing homoserine lactone (HSL) and the corresponding fatty acid. Possesses a specificity for the degradation of long-chain acyl-HSLs (side chains of 11 to 14 carbons in length). This is Acyl-homoserine lactone acylase PvdQ (pvdQ) from Pseudomonas savastanoi pv. phaseolicola (strain 1448A / Race 6) (Pseudomonas syringae pv. phaseolicola (strain 1448A / Race 6)).